An 82-amino-acid chain; its full sequence is Cytotoxin homolog Clbp-3 (82 aa).

Residues 1 to 21 form the signal peptide; that stretch reads MKTLLLTLVVVTIVCLDLGYT. 4 disulfide bridges follow: C24-C43, C36-C60, C64-C75, and C76-C81.

Belongs to the three-finger toxin family. Short-chain subfamily. Orphan group XV sub-subfamily. Expressed by the venom gland.

The protein resides in the secreted. The protein localises to the target cell membrane. Its function is as follows. Has low cytotoxic activity. The chain is Cytotoxin homolog Clbp-3 from Naja atra (Chinese cobra).